Reading from the N-terminus, the 490-residue chain is Transmembrane protein 185-like (490 aa).

Over residues 1 to 31 the composition is skewed to low complexity; that stretch reads MIENENTSLLSTSSSSTSSSPNNANSPSSLN. Disordered stretches follow at residues 1-151 and 455-490; these read MIEN…SKYK and NMIN…ISNL. Residues 47 to 59 are compositionally biased toward polar residues; the sequence is TSGNNSPSAQITK. Composition is skewed to low complexity over residues 66-80 and 89-108; these read SNNS…NSRS and NNNN…NNIN. Over residues 109–125 the composition is skewed to polar residues; the sequence is KHNSIVYNKSNNKLNSI. Positions 133 to 145 are enriched in gly residues; it reads QGGGGGNGNGNGN. The segment covering 463 to 472 has biased composition (acidic residues); that stretch reads SESESDDETE.

Belongs to the TMEM185 family.

The polypeptide is Transmembrane protein 185-like (Dictyostelium discoideum (Social amoeba)).